A 385-amino-acid chain; its full sequence is ELAV-like protein 4 (385 aa).

The tract at residues 12–48 (TMEPQVSNGPTSNTSNGPSSNNRNCPSPMQTGAATDD) is disordered. Over residues 18–33 (SNGPTSNTSNGPSSNN) the composition is skewed to low complexity. The segment covering 34–44 (RNCPSPMQTGA) has biased composition (polar residues). Serine 38 carries the phosphoserine modification. RRM domains lie at 51 to 129 (TNLI…YARP) and 137 to 217 (ANLY…FANN). Serine 233 is modified (phosphoserine). Residue arginine 248 is modified to Asymmetric dimethylarginine; by CARM1; alternate. Arginine 248 carries the omega-N-methylarginine; by CARM1; alternate modification. Residues 302–380 (WCIFVYNLSP…RVLQVSFKTN (79 aa)) enclose the RRM 3 domain.

The protein belongs to the RRM elav family. In terms of assembly, component of a TAU mRNP complex, at least composed of IGF2BP1, ELAVL4 and G3BP. Associates with the EIF4F cap-binding complex, composed of EIF4G, EIF4A, EIF4E and PABP. Within the EIF4F cap-binding complex, interacts with EIF4A. Interacts with SMN (via Tudor domain) in an RNA-independent manner; the interaction is required for localization of ELAVL4 to RNA granules. Interacts with MAP1 light chain LC1 (via C-terminus); the interaction contributes to the association of ELAVL4 with microtubules. Interacts with MAP1 light chain LC2. Methylated by CARM1, which leads to reduced RNA-binding activity and enhanced interaction with SMN. Methylation at Arg-248 by CARM1 weakens protective binding to the 3'UTR of CDKN1A mRNA and down-regulates CDKN1A protein expression, thereby maintaining cells in a proliferative state. Methylation is inhibited by NGF, which facilitates neurite outgrowth. As to expression, expressed in the brain, including the hippocampus, and in pancreatic beta cells (at protein level). Expressed in pyramidal neurons of the hippocampal CA3 and CA1 region and in the hilus but not in dentate granule cells (at protein level). Expressed in the dorsal root ganglion and the spinal cord (at protein level). Expressed in neural stem and progenitor cells (at protein level). Expressed in radial glia-like cells and in transient amplifying cells in the subventricular zone (SVZ), and in immature neurons both in the SVZ and the rostral migratory stream as well as in mature neurons in the olfactory bulb (at protein level). Expressed in testis and in the brain, including the hippocampus, the neocortex and the cerebellum. Expressed in lower- but not upper-layer primary neurons of the mature neocortex, in the hippocampal regions CA1-3 and the dentate gyrus. Expressed in the mitral and granule cells of the olfactory bulb, cerebral cortex, entorhinal cortex, thalamus, medial habenula, amygdala, granule cells of the cerebellum, pons, olivary nucleus, dorsal and ventral spinal cord and in dorsal root ganglia. Expressed in motor neurons. Isoform 4: Expressed in the brain. Isoform 5: Expressed in the brain. Isoform 6: Expressed in the brain. Isoform 7: Expressed in the brain. Isoform 8: Expressed in the brain. Isoform 9: Expressed in the brain. Isoform 10: Expressed in the brain. Isoform 11: Expressed in the brain.

It localises to the cytoplasm. It is found in the perikaryon. The protein localises to the cell projection. Its subcellular location is the dendrite. The protein resides in the axon. It localises to the growth cone. RNA-binding protein that is involved in the post-transcriptional regulation of mRNAs. Plays a role in the regulation of mRNA stability, alternative splicing and translation. Binds to AU-rich element (ARE) sequences in the 3' untranslated region (3'UTR) of target mRNAs, including GAP43, VEGF, FOS, CDKN1A and ACHE mRNA. Many of the target mRNAs are coding for RNA-binding proteins, transcription factors and proteins involved in RNA processing and/or neuronal development and function. By binding to the mRNA 3'UTR, decreases mRNA deadenylation and thereby contributes to the stabilization of mRNA molecules and their protection from decay. Also binds to the polyadenylated (poly(A)) tail in the 3'UTR of mRNA, thereby increasing its affinity for mRNA binding. Mainly plays a role in neuron-specific RNA processing by stabilization of mRNAs such as GAP43, ACHE and mRNAs of other neuronal proteins, thereby contributing to the differentiation of neural progenitor cells, nervous system development, learning and memory mechanisms. Involved in the negative regulation of the proliferative activity of neuronal stem cells and in the positive regulation of neuronal differentiation of neural progenitor cells. Promotes neuronal differentiation of neural stem/progenitor cells in the adult subventricular zone of the hippocampus by binding to and stabilizing SATB1 mRNA. Binds and stabilizes MSI1 mRNA in neural stem cells. Exhibits increased binding to ACHE mRNA during neuronal differentiation, thereby stabilizing ACHE mRNA and enhancing its expression. Protects CDKN1A mRNA from decay by binding to its 3'-UTR. May bind to APP and BACE1 mRNAS and the BACE1AS lncRNA and enhance their stabilization. Plays a role in neurite outgrowth and in the establishment and maturation of dendritic arbors, thereby contributing to neocortical and hippocampal circuitry function. Stabilizes GAP43 mRNA and protects it from decay during postembryonic development in the brain. By promoting the stabilization of GAP43 mRNA, plays a role in NGF-mediated neurite outgrowth. Binds to BDNF long 3'UTR mRNA, thereby leading to its stabilization and increased dendritic translation after activation of PKC. By increasing translation of BDNF after nerve injury, may contribute to nerve regeneration. Acts as a stabilizing factor by binding to the 3'UTR of NOVA1 mRNA, thereby increasing its translation and enhancing its functional activity in neuron-specific splicing. Stimulates translation of mRNA in a poly(A)- and cap-dependent manner, possibly by associating with the EIF4F cap-binding complex. May also negatively regulate translation by binding to the 5'UTR of Ins2 mRNA, thereby repressing its translation. Upon glucose stimulation, Ins2 mRNA is released from ELAVL4 and translational inhibition is abolished. Also plays a role in the regulation of alternative splicing. May regulate alternative splicing of CALCA pre-mRNA into Calcitonin and Calcitonin gene-related peptide 1 (CGRP) by competing with splicing regulator TIAR for binding to U-rich sequences of CALCA pre-mRNA. The protein is ELAV-like protein 4 (Elavl4) of Mus musculus (Mouse).